A 341-amino-acid polypeptide reads, in one-letter code: MTDHALLLVNLGSPASTSVADVRSYLNQFLMDPYVIDLPWPVRRLLVSLILIKRPEQSAHAYASIWWDEGSPLVVLSRRLQQQMTAQWTQGPVELAMRYGEPSIESVLTRLATQGIRNVTLAPLYPQFADSTVTTVIEEAKRVVRDKKLDVQFSILQPFYDQPEYLDALVASARPYVEQDYDHLLLSFHGLPERHLTKLDPTGQHCFKDADCCKNASAEVLKTCYRAQCFSVARDFAERMGLPEGKWSVAFQSRLGRAKWIEPYTEARLEALAQQGVKKLLVMCPAFVADCIETLEEIGDRGLEQFREAGGEELVLVPCLNDDPQWAKALNTLCERAPTAL.

The Fe cation site is built by His189 and Glu293.

The protein belongs to the ferrochelatase family.

It is found in the cytoplasm. The catalysed reaction is heme b + 2 H(+) = protoporphyrin IX + Fe(2+). It participates in porphyrin-containing compound metabolism; protoheme biosynthesis; protoheme from protoporphyrin-IX: step 1/1. In terms of biological role, catalyzes the ferrous insertion into protoporphyrin IX. The sequence is that of Ferrochelatase from Pseudomonas fluorescens (strain SBW25).